A 536-amino-acid polypeptide reads, in one-letter code: CTP synthase (536 aa).

An amidoligase domain region spans residues Met1 to Leu267. Ser13 contacts CTP. Ser13 contacts UTP. Ser14–Ile19 is a binding site for ATP. Tyr54 serves as a coordination point for L-glutamine. ATP is bound at residue Asp71. Positions 71 and 141 each coordinate Mg(2+). CTP contacts are provided by residues Asp148–Glu150, Lys188–Gln193, and Lys224. UTP-binding positions include Lys188–Gln193 and Lys224. ATP is bound at residue Arg240–Ala242. Residues Thr293–Ser535 enclose the Glutamine amidotransferase type-1 domain. Gly355 is a binding site for L-glutamine. Cys382 functions as the Nucleophile; for glutamine hydrolysis in the catalytic mechanism. Residues Leu383–Gln386, Glu406, and Arg463 contribute to the L-glutamine site. Catalysis depends on residues His508 and Glu510.

This sequence belongs to the CTP synthase family. In terms of assembly, homotetramer.

The enzyme catalyses UTP + L-glutamine + ATP + H2O = CTP + L-glutamate + ADP + phosphate + 2 H(+). It carries out the reaction L-glutamine + H2O = L-glutamate + NH4(+). The catalysed reaction is UTP + NH4(+) + ATP = CTP + ADP + phosphate + 2 H(+). Its pathway is pyrimidine metabolism; CTP biosynthesis via de novo pathway; CTP from UDP: step 2/2. Allosterically activated by GTP, when glutamine is the substrate; GTP has no effect on the reaction when ammonia is the substrate. The allosteric effector GTP functions by stabilizing the protein conformation that binds the tetrahedral intermediate(s) formed during glutamine hydrolysis. Inhibited by the product CTP, via allosteric rather than competitive inhibition. Its function is as follows. Catalyzes the ATP-dependent amination of UTP to CTP with either L-glutamine or ammonia as the source of nitrogen. Regulates intracellular CTP levels through interactions with the four ribonucleotide triphosphates. This is CTP synthase from Staphylococcus saprophyticus subsp. saprophyticus (strain ATCC 15305 / DSM 20229 / NCIMB 8711 / NCTC 7292 / S-41).